A 168-amino-acid chain; its full sequence is Protein-export protein SecB (168 aa).

The protein belongs to the SecB family. As to quaternary structure, homotetramer, a dimer of dimers. One homotetramer interacts with 1 SecA dimer.

The protein localises to the cytoplasm. Functionally, one of the proteins required for the normal export of preproteins out of the cell cytoplasm. It is a molecular chaperone that binds to a subset of precursor proteins, maintaining them in a translocation-competent state. It also specifically binds to its receptor SecA. This Sinorhizobium medicae (strain WSM419) (Ensifer medicae) protein is Protein-export protein SecB.